A 776-amino-acid polypeptide reads, in one-letter code: Kinesin-like protein KIN-8A (776 aa).

2 disordered regions span residues 1-31 and 80-135; these read MPVS…RGGA and VGEV…KSSH. Residues 7 to 26 are compositionally biased toward low complexity; sequence ASAAGGQPWSSAAPAPASAP. Residues 123–132 are compositionally biased toward pro residues; the sequence is PPPPPAPPPK. A Kinesin motor domain is found at 205-534; the sequence is RIMVFVRLRP…LHWADRAKEI (330 aa). An ATP-binding site is contributed by 297-304; it reads GATGAGKT. Residues 554-592 adopt a coiled-coil conformation; sequence TDQAKLVLELQKENSELRQQLARQQQKLLTVQAQTLASN. The interval 590 to 611 is disordered; sequence ASNASPQQSPAPSAQISTPCST. The segment covering 593 to 604 has biased composition (low complexity); that stretch reads ASPQQSPAPSAQ. Residues 634-671 are a coiled coil; the sequence is AAENAQVRDLQRKVKAMEAEIEKMKKEHLLQLKQKDEF.

This sequence belongs to the TRAFAC class myosin-kinesin ATPase superfamily. Kinesin family. KIN-8 subfamily.

This Oryza sativa subsp. japonica (Rice) protein is Kinesin-like protein KIN-8A.